Here is a 708-residue protein sequence, read N- to C-terminus: MEVNHQSNDLGLVALKMLAQYHNIPLNPEEIKHKFDIEGKGLTLTSWLLAAKSLELKAKHIKKEISRLHLVNLPALVWQDNGKHFLLVKIDTDKKRYLTYNLEQDAPKILSQEEFESCYQGKIILVTSRASIVGQLAKFDFTWFIPAVIKYRKIFLETLLVSIFLQIFALITPLFFQVVMDKVLVHRGFSTLNIITVALAIVIIFEIVLSGLRTYIFAHSTSRIDVELGARLFRHLLALPISYFENRRVGDTVARVRELDQIRNFLTGQALTSVLDLLFSFIFFAVMWYYSPKLTLVILGSLPCYILWSIFISPILRRRLDDKFARGADNQAFLVESVTAINMIKAMAVSPQMTDTWDKQLASYVSSSFRVTVLATIGQQGVQLIQKTVMVINLWLGAHLVISGDLSIGQLIAFNMLSGQVIAPVIRLAQLWQDFTQVGISVTRLGDVLNSPTEQYQGKLSLPEIQGDIAFKNIRFRYKPDAPTILNNVNLEIKKGEVIGIVGRSGSGKSTLTKLLQRFYIPENGQVLIDGHDLALADPNWLRRQIGVVLQDNVLLNRSIRENIALSEPGMSMERVIYAAKLAGAHDFISDVREGYNTIVGEQGAGLSGGQRQRIAIARALVNNPKILIFDEATSALDYESEHIIMQNMQKICQGRTVILIAHRLSTVKNADRIIVMEKGEIVEQGKHNELLQNNNGLYSYLHQLQLN.

One can recognise a Peptidase C39 domain in the interval 1 to 126 (MEVNHQSNDL…SCYQGKIILV (126 aa)). The ABC transmembrane type-1 domain occupies 155–437 (FLETLLVSIF…LAQLWQDFTQ (283 aa)). 5 helical membrane passes run 159 to 179 (LLVS…FQVV), 192 to 212 (LNII…LSGL), 270 to 290 (ALTS…MWYY), 296 to 316 (LVIL…SPIL), and 389 to 409 (VMVI…LSIG). Positions 469–704 (IAFKNIRFRY…NNGLYSYLHQ (236 aa)) constitute an ABC transporter domain. Residue 503-510 (GRSGSGKS) coordinates ATP.

It belongs to the ABC transporter superfamily. Protein-1 exporter (TC 3.A.1.109) family. As to quaternary structure, homodimer.

The protein resides in the cell inner membrane. It carries out the reaction ATP + H2O + proteinSide 1 = ADP + phosphate + proteinSide 2.. Its function is as follows. Part of the ABC transporter complex LktBD involved in leukotoxin export. Transmembrane domains (TMD) form a pore in the inner membrane and the ATP-binding domain (NBD) is responsible for energy generation. In Pasteurella haemolytica-like sp. (strain 5943B), this protein is Leukotoxin translocation ATP-binding protein LktB (lktB).